The sequence spans 113 residues: Nitrogenase-stabilizing/protective protein NifW (113 aa).

The protein belongs to the NifW family. As to quaternary structure, homotrimer; associates with NifD.

Functionally, may protect the nitrogenase Fe-Mo protein from oxidative damage. In Dechloromonas aromatica (strain RCB), this protein is Nitrogenase-stabilizing/protective protein NifW.